The sequence spans 191 residues: Protein GrpE (191 aa).

The interval 1–22 (MKDKHNQEHDHLSQEEPESCEK) is disordered.

Belongs to the GrpE family. Homodimer.

Its subcellular location is the cytoplasm. Its function is as follows. Participates actively in the response to hyperosmotic and heat shock by preventing the aggregation of stress-denatured proteins, in association with DnaK and GrpE. It is the nucleotide exchange factor for DnaK and may function as a thermosensor. Unfolded proteins bind initially to DnaJ; upon interaction with the DnaJ-bound protein, DnaK hydrolyzes its bound ATP, resulting in the formation of a stable complex. GrpE releases ADP from DnaK; ATP binding to DnaK triggers the release of the substrate protein, thus completing the reaction cycle. Several rounds of ATP-dependent interactions between DnaJ, DnaK and GrpE are required for fully efficient folding. This is Protein GrpE from Helicobacter pylori (strain Shi470).